The following is a 482-amino-acid chain: Glycogen synthase (482 aa).

ADP-alpha-D-glucose is bound at residue Lys15.

Belongs to the glycosyltransferase 1 family. Bacterial/plant glycogen synthase subfamily.

It catalyses the reaction [(1-&gt;4)-alpha-D-glucosyl](n) + ADP-alpha-D-glucose = [(1-&gt;4)-alpha-D-glucosyl](n+1) + ADP + H(+). Its pathway is glycan biosynthesis; glycogen biosynthesis. Its function is as follows. Synthesizes alpha-1,4-glucan chains using ADP-glucose. This is Glycogen synthase from Elusimicrobium minutum (strain Pei191).